Reading from the N-terminus, the 146-residue chain is Leghemoglobin (146 aa).

The Globin domain occupies 3-146 (AFTEKQEALV…FAAGIKKAYA (144 aa)). Residues Y26 and Y31 each carry the nitrated tyrosine modification. S46 contributes to the heme b binding site. Phosphoserine is present on S46. Position 62 (H62) interacts with O2. Residues H93 and K96 each contribute to the heme b site. Y134 is subject to Nitrated tyrosine.

This sequence belongs to the plant globin family. As to quaternary structure, monomer. Nitrated mainly at Tyr-31 and, to a lower extent, at Tyr-26 and Tyr-134, in effective nodules and particularly in hypoxic conditions; this mechanism may play a protective role in the symbiosis by buffering toxic peroxynitrite NO(2)(-). Nitration level decrease during nodule senescence. Post-translationally, phosphorylation at Ser-46 disrupts the molecular environment of its porphyrin ring oxygen binding pocket, thus leading to a reduced oxygen consumption and to the delivery of oxygen O(2) to symbiosomes. As to expression, root nodules.

The protein localises to the cytoplasm. The protein resides in the cytosol. It is found in the nucleus. Leghemoglobin that reversibly binds oxygen O(2) through a pentacoordinated heme iron. In root nodules, facilitates the diffusion of oxygen to the bacteroids while preventing the bacterial nitrogenase from being inactivated by buffering dioxygen, nitric oxide and carbon monoxide, and promoting the formation of reactive oxygen species (ROS, e.g. H(2)O(2)). This role is essential for symbiotic nitrogen fixation (SNF). In Phaseolus vulgaris (Kidney bean), this protein is Leghemoglobin.